The sequence spans 636 residues: Biosynthetic arginine decarboxylase (636 aa).

Position 101 is an N6-(pyridoxal phosphate)lysine (Lys-101). 286 to 296 (FDVGGGLAVDY) is a substrate binding site.

Belongs to the Orn/Lys/Arg decarboxylase class-II family. SpeA subfamily. Mg(2+) is required as a cofactor. The cofactor is pyridoxal 5'-phosphate.

The enzyme catalyses L-arginine + H(+) = agmatine + CO2. Its pathway is amine and polyamine biosynthesis; agmatine biosynthesis; agmatine from L-arginine: step 1/1. Catalyzes the biosynthesis of agmatine from arginine. This is Biosynthetic arginine decarboxylase from Shewanella frigidimarina (strain NCIMB 400).